Consider the following 510-residue polypeptide: Light-independent protochlorophyllide reductase subunit B (510 aa).

Aspartate 36 provides a ligand contact to [4Fe-4S] cluster. Catalysis depends on aspartate 297, which acts as the Proton donor. 432–433 (GM) contributes to the substrate binding site.

This sequence belongs to the ChlB/BchB/BchZ family. As to quaternary structure, protochlorophyllide reductase is composed of three subunits; ChlL, ChlN and ChlB. Forms a heterotetramer of two ChlB and two ChlN subunits. [4Fe-4S] cluster serves as cofactor.

The protein resides in the plastid. Its subcellular location is the chloroplast. It catalyses the reaction chlorophyllide a + oxidized 2[4Fe-4S]-[ferredoxin] + 2 ADP + 2 phosphate = protochlorophyllide a + reduced 2[4Fe-4S]-[ferredoxin] + 2 ATP + 2 H2O. The protein operates within porphyrin-containing compound metabolism; chlorophyll biosynthesis (light-independent). In terms of biological role, component of the dark-operative protochlorophyllide reductase (DPOR) that uses Mg-ATP and reduced ferredoxin to reduce ring D of protochlorophyllide (Pchlide) to form chlorophyllide a (Chlide). This reaction is light-independent. The NB-protein (ChlN-ChlB) is the catalytic component of the complex. This chain is Light-independent protochlorophyllide reductase subunit B, found in Pinus koraiensis (Korean pine).